Here is a 109-residue protein sequence, read N- to C-terminus: MNECVNKLLHLKFLFYFILGIQKRPVFFVASRYGRSTTYDESLKSRRIFIVPRNEHFFLGSRYGKRSGKYLCLSREINKLIVRKRLRNNDKERTPTLSFITKHFLMRNT.

The signal sequence occupies residues 1 to 22; sequence MNECVNKLLHLKFLFYFILGIQ. Tyr33 bears the Tyrosine amide mark. Residues 36 to 53 constitute a propeptide that is removed on maturation; the sequence is STTYDESLKSRRIFIVPR. Tyr63 bears the Tyrosine amide mark. The propeptide occupies 67 to 109; sequence SGKYLCLSREINKLIVRKRLRNNDKERTPTLSFITKHFLMRNT.

The protein resides in the secreted. In terms of biological role, neuropeptides RYamide-1 and RYamide-2 are ligands for the G-protein coupled receptor RYa-R. May suppress feeding behavior. This Drosophila melanogaster (Fruit fly) protein is RYamide neuropeptides.